We begin with the raw amino-acid sequence, 706 residues long: Choline transporter-like protein 2 (706 aa).

The Cytoplasmic portion of the chain corresponds to 1–33; the sequence is MGKDSQNYYGKHGTPQKYDPTFKGPIYNRGCTD. Phosphothreonine is present on Thr14. Residues 34 to 54 form a helical membrane-spanning segment; it reads VICCVLLFLAIVGYVAVGIIA. Topologically, residues 55 to 232 are extracellular; that stretch reads WTHGDPRKVI…QIFEDYTVSW (178 aa). N-linked (GlcNAc...) asparagine glycans are attached at residues Asn187 and Asn200. The helical transmembrane segment at 233-253 threads the bilayer; it reads YWIIIGLVIAMVLSLLFIVLL. Topologically, residues 254-256 are cytoplasmic; sequence RFL. The helical transmembrane segment at 257–277 threads the bilayer; that stretch reads AGIMVWVMIVMVILVLGYGIF. At 278–315 the chain is on the extracellular side; that stretch reads HCYMEYSRLRGEAGSDVSLVDLGFQTDLRVYLHLRQTW. Residues 316-336 traverse the membrane as a helical segment; that stretch reads MAFMIILSILEVVIILLLIFL. At 337 to 364 the chain is on the cytoplasmic side; it reads RKRILIAIALIKEASRAVGHVMCSLLYP. The helical transmembrane segment at 365–385 threads the bilayer; that stretch reads LVTFFLLCLCIAYWASTSVFL. Residues 386 to 454 are Extracellular-facing; it reads STSNTAVYKV…LQIFNAFMFF (69 aa). N-linked (GlcNAc...) asparagine glycosylation is present at Asn417. The helical transmembrane segment at 455 to 477 threads the bilayer; the sequence is WLANFVLALGQVTLAGAFASYYW. The Cytoplasmic portion of the chain corresponds to 478-504; that stretch reads AMRKPDDMPAFPLFSAFGRALRYHTGS. The chain crosses the membrane as a helical span at residues 505–525; that stretch reads LAFGSLILAIVQIIRVMLEYL. Over 526–563 the chain is Extracellular; it reads DQRLKAAQNKFAKFLMVCLKCCFWCLEKFIKFLNRNAY. The helical transmembrane segment at 564–584 threads the bilayer; it reads IMIAIYGTNFCTSARNAFFLL. Over 585–599 the chain is Cytoplasmic; it reads MRNIIRVAVLDKVTD. Residues 600–620 traverse the membrane as a helical segment; the sequence is FLFLLGKLLIVGSVGILAFFF. Residues 621-638 are Extracellular-facing; that stretch reads FTHRIRIVQDTAPPLNYY. Residues 639–659 form a helical membrane-spanning segment; sequence WVPILTVIIGSYLIAHGFFSV. The Cytoplasmic portion of the chain corresponds to 660–706; that stretch reads YGMCVDTLFLCFLEDLERNDGSAERPYFMSSTLKKLLNKTNKKVAES.

This sequence belongs to the CTL (choline transporter-like) family. In terms of assembly, interacts with COCH. In terms of processing, glycosylated, glycosylation differs from tissue to tissue. The molecular mass of the mature glycosylated protein is highest in kidney, followed by lung, colon and spleen, then brain and tongue. As to expression, expressed at high levels in lung, colon, inner ear and spleen (at protein level). Progressively lower levels in brain, tongue, liver and kidney (at protein level). In the kidney, prominent expression in glomeruli in the lining of Bowman's capsule and on the mesangial cells adjacent to the vessels within the glomerulus (at protein level). Strongly expressed on the membranes of splenocytes and in lung parenchyme (at protein level). Expressed at higher levels than isoform 2 in colon, heart, kidney, lung, cochlea, tongue and muscle, as well as in the inner ear. In terms of tissue distribution, predominantly expressed in brain, liver and spleen.

The protein localises to the cell membrane. The protein resides in the mitochondrion outer membrane. It catalyses the reaction choline(out) + n H(+)(in) = choline(in) + n H(+)(out). The enzyme catalyses ethanolamine(out) + n H(+)(in) = ethanolamine(in) + n H(+)(out). In terms of biological role, choline/H+ antiporter, mainly in mitochodria. Also acts as a low-affinity ethanolamine/H+ antiporter, regulating the supply of extracellular ethanolamine (Etn) for the CDP-Etn pathway, redistribute intracellular Etn and balance the CDP-Cho and CDP-Etn arms of the Kennedy pathway. This is Choline transporter-like protein 2 (Slc44a2) from Mus musculus (Mouse).